A 209-amino-acid polypeptide reads, in one-letter code: D-aminoacyl-tRNA deacylase 1 (209 aa).

The Gly-cisPro motif, important for rejection of L-amino acids signature appears at 139–140 (GP). Residues 142-209 (TIELESPAPG…EGDVSSEREP (68 aa)) are disordered. 2 stretches are compositionally biased toward basic and acidic residues: residues 159 to 170 (QLSKLEKQQQRK) and 181 to 194 (SSKE…EDRS). Ser-197, Ser-204, and Ser-205 each carry phosphoserine.

It belongs to the DTD family. As to quaternary structure, homodimer. Interacts with CDC45 and TOPBP1. Preferentially phosphorylated in cells arrested early in S phase. Phosphorylation in the C-terminus weakens the interaction with CDC45.

The protein resides in the nucleus. It localises to the cytoplasm. It carries out the reaction glycyl-tRNA(Ala) + H2O = tRNA(Ala) + glycine + H(+). The catalysed reaction is a D-aminoacyl-tRNA + H2O = a tRNA + a D-alpha-amino acid + H(+). In terms of biological role, an aminoacyl-tRNA editing enzyme that deacylates mischarged D-aminoacyl-tRNAs. Also deacylates mischarged glycyl-tRNA(Ala), protecting cells against glycine mischarging by AlaRS. Acts via tRNA-based rather than protein-based catalysis; rejects L-amino acids rather than detecting D-amino acids in the active site. By recycling D-aminoacyl-tRNA to D-amino acids and free tRNA molecules, this enzyme counteracts the toxicity associated with the formation of D-aminoacyl-tRNA entities in vivo and helps enforce protein L-homochirality. Its function is as follows. ATPase involved in DNA replication, may facilitate loading of CDC45 onto pre-replication complexes. This Mus musculus (Mouse) protein is D-aminoacyl-tRNA deacylase 1 (Dtd1).